A 338-amino-acid chain; its full sequence is Lipoate-protein ligase A (338 aa).

The BPL/LPL catalytic domain maps to 29–216 (PATQRVLFLW…AFFAHYGERV (188 aa)). ATP contacts are provided by residues Arg71, 76–79 (GAVF), and Lys134. Lys134 is a binding site for (R)-lipoate.

Belongs to the LplA family. Monomer.

The protein localises to the cytoplasm. It catalyses the reaction L-lysyl-[lipoyl-carrier protein] + (R)-lipoate + ATP = N(6)-[(R)-lipoyl]-L-lysyl-[lipoyl-carrier protein] + AMP + diphosphate + H(+). Its pathway is protein modification; protein lipoylation via exogenous pathway; protein N(6)-(lipoyl)lysine from lipoate: step 1/2. It functions in the pathway protein modification; protein lipoylation via exogenous pathway; protein N(6)-(lipoyl)lysine from lipoate: step 2/2. Catalyzes both the ATP-dependent activation of exogenously supplied lipoate to lipoyl-AMP and the transfer of the activated lipoyl onto the lipoyl domains of lipoate-dependent enzymes. The chain is Lipoate-protein ligase A from Salmonella paratyphi C (strain RKS4594).